Here is a 723-residue protein sequence, read N- to C-terminus: MATLEEEFTLSTGVLGAGPEGFLGVEQTDKADQFLVTDSGRTVVLYKVSDQKPLGSWSVKQGQSITCPAVCNFQTGEYIMVHDHKVLRIWNNDDVNVDKVFKATLSAEVHRIHSVQRTEPLVLFRGGAARGLEALLVEPQQNIESVIPDEEVIVWSEVFMLFKQPVLIFITENHGHYYAYVRLCKSHSLSKYTLLLEKEEKSVKPNFTARVDGKFISLVSLSSDGCIYETLIPIYSSDTEQNQRLVRALMLKSVVSGGVRNGVALTILDQDHIAVLGPPLSASKECLSIWNIKFQTLQTSKELPQGTSGQLWYHGEVLFMLHGKSLTVIPYKCEESSLAGALGKLKHTQESGTHSVPHFVNWETCSGYELGSSGAEQSRTLRRKKVETNLQPEVPGFKQLLSIIKKDSEKHIEVELRKFLAKSTPAFHTIIGDLVAGLVGRCKAEPSFYPRNCLTQLIQTHVLSYSLCPDLMEIALEHTDVQMLQLCLQQFPDIPESTTCACLKLFLSVGDDCLRDSNINMESVFDYSDSTQDEKKEMEEQIEIVQNGFGPEDGNCSEDSQQLNDKPADTAHEPGSFPVTSCPVAPKRAALLNAVLHSAYSEPFLLPHLKDIPAKHVTLFLQYLYFLYLKCTGSATMTLPGVNPPTVSQIMDWICLLLDANFTVLLMIPEAKRLLLILYNFVKSQISIYSELNKIAVSFRELQRLNREKSSRGLYSIEVLELF.

Position 346 is an N6-methyllysine (Lys-346). Residues 549-572 are disordered; it reads FGPEDGNCSEDSQQLNDKPADTAH.

As to quaternary structure, interacts with UTP4. Interacts with FBL/fibrillarin in a transcription-dependent manner. May associate with the proposed t-UTP subcomplex of the SSU processome containing at least UTP4, WDR43, HEATR1, UTP15, WDR75.

Its subcellular location is the nucleus. The protein localises to the nucleolus. Ribosome biogenesis factor. May be required for both optimal rDNA transcription and small subunit (SSU) pre-rRNA processing at sites A', A0, 1 and 2b. The protein is Nucleolar protein 11 (Nol11) of Mus musculus (Mouse).